Consider the following 151-residue polypeptide: Ubiquitin-conjugating enzyme E2 2 (151 aa).

In terms of domain architecture, UBC core spans 4–150 (AARRRLMRDF…VRETVERSWE (147 aa)). Cysteine 88 functions as the Glycyl thioester intermediate in the catalytic mechanism.

The protein belongs to the ubiquitin-conjugating enzyme family.

The protein resides in the cytoplasm. Its subcellular location is the nucleus. It carries out the reaction S-ubiquitinyl-[E1 ubiquitin-activating enzyme]-L-cysteine + [E2 ubiquitin-conjugating enzyme]-L-cysteine = [E1 ubiquitin-activating enzyme]-L-cysteine + S-ubiquitinyl-[E2 ubiquitin-conjugating enzyme]-L-cysteine.. Its pathway is protein modification; protein ubiquitination. Functionally, catalyzes the covalent attachment of ubiquitin to other proteins. Plays a role in transcription regulation by catalyzing the monoubiquitination of histone H2B to form H2BK123ub1. H2BK123ub1 gives a specific tag for epigenetic transcriptional activation and is also a prerequisite for H3K4me and H3K79me formation. Also involved in postreplication repair of UV-damaged DNA, in N-end rule-dependent protein degradation and in sporulation. This is Ubiquitin-conjugating enzyme E2 2 (UBC2) from Trichoderma harzianum (Hypocrea lixii).